The sequence spans 233 residues: Thrombin-like enzyme elegaxobin-1 (233 aa).

The Peptidase S1 domain occupies 1–224; it reads VIGGDECNIN…HLDWIKGIIA (224 aa). 6 disulfides stabilise this stretch: Cys-7–Cys-138, Cys-25–Cys-41, Cys-73–Cys-231, Cys-117–Cys-185, Cys-149–Cys-164, and Cys-175–Cys-200. Catalysis depends on charge relay system residues His-40 and Asp-85. Ser-179 functions as the Charge relay system in the catalytic mechanism.

Belongs to the peptidase S1 family. Snake venom subfamily. In terms of assembly, monomer. Expressed by the venom gland.

Its subcellular location is the secreted. In terms of biological role, thrombin-like snake venom serine protease that clots rabbit fibrinogen. Only the beta chain of fibrinogen (FGB) is cleaved, releasing fibrinopeptide B. Incubation with human fibrinogen alpha and beta resulted in cleavage of both fibrinogen chains but generated neither fibrinopeptide A nor fibrinopeptide B. Promotes clotting of rabbit fibrinogen, but not bovine or human fibrinogen. The polypeptide is Thrombin-like enzyme elegaxobin-1 (Protobothrops elegans (Elegant pitviper)).